The chain runs to 337 residues: Glycerol-3-phosphate dehydrogenase [NAD(P)+] 2 (337 aa).

NADPH-binding residues include Thr-11, Trp-12, and Lys-105. 3 residues coordinate sn-glycerol 3-phosphate: Lys-105, Gly-139, and Thr-141. Ala-143 contributes to the NADPH binding site. Lys-194, Asp-247, Ser-257, Arg-258, and Asn-259 together coordinate sn-glycerol 3-phosphate. Lys-194 functions as the Proton acceptor in the catalytic mechanism. Arg-258 serves as a coordination point for NADPH. Residues Val-282 and Glu-284 each coordinate NADPH.

The protein belongs to the NAD-dependent glycerol-3-phosphate dehydrogenase family.

The protein localises to the cytoplasm. The enzyme catalyses sn-glycerol 3-phosphate + NAD(+) = dihydroxyacetone phosphate + NADH + H(+). The catalysed reaction is sn-glycerol 3-phosphate + NADP(+) = dihydroxyacetone phosphate + NADPH + H(+). The protein operates within membrane lipid metabolism; glycerophospholipid metabolism. Functionally, catalyzes the reduction of the glycolytic intermediate dihydroxyacetone phosphate (DHAP) to sn-glycerol 3-phosphate (G3P), the key precursor for phospholipid synthesis. The sequence is that of Glycerol-3-phosphate dehydrogenase [NAD(P)+] 2 from Lactobacillus delbrueckii subsp. bulgaricus (strain ATCC 11842 / DSM 20081 / BCRC 10696 / JCM 1002 / NBRC 13953 / NCIMB 11778 / NCTC 12712 / WDCM 00102 / Lb 14).